We begin with the raw amino-acid sequence, 159 residues long: Cytochrome b6-f complex subunit 4 (159 aa).

3 helical membrane-spanning segments follow: residues 35–55 (ILIFGVVILGTIFGVIALAVL), 93–113 (LLGVVLMAAIPIGLALVPFIE), and 127–147 (ATAVFLIGTVVTMYLGIGAMI).

This sequence belongs to the cytochrome b family. PetD subfamily. In terms of assembly, the 4 large subunits of the cytochrome b6-f complex are cytochrome b6, subunit IV (17 kDa polypeptide, PetD), cytochrome f and the Rieske protein, while the 4 small subunits are PetG, PetL, PetM and PetN. The complex functions as a dimer.

The protein localises to the cell inner membrane. In terms of biological role, component of the cytochrome b6-f complex, which mediates electron transfer between photosystem II (PSII) and photosystem I (PSI), cyclic electron flow around PSI, and state transitions. The protein is Cytochrome b6-f complex subunit 4 of Gloeobacter violaceus (strain ATCC 29082 / PCC 7421).